The sequence spans 178 residues: Ribosome maturation factor RimM (178 aa).

Residues 101 to 178 form the PRC barrel domain; it reads ADEYYWYQLV…VMRVEWDADF (78 aa).

Belongs to the RimM family. As to quaternary structure, binds ribosomal protein uS19.

It is found in the cytoplasm. Its function is as follows. An accessory protein needed during the final step in the assembly of 30S ribosomal subunit, possibly for assembly of the head region. Essential for efficient processing of 16S rRNA. May be needed both before and after RbfA during the maturation of 16S rRNA. It has affinity for free ribosomal 30S subunits but not for 70S ribosomes. The sequence is that of Ribosome maturation factor RimM from Pseudomonas putida (strain ATCC 700007 / DSM 6899 / JCM 31910 / BCRC 17059 / LMG 24140 / F1).